A 436-amino-acid chain; its full sequence is Protein translocase subunit SecY (436 aa).

The next 8 helical transmembrane spans lie at 17 to 37 (ILLT…PVPY), 72 to 92 (FGLL…IQLL), 122 to 142 (TFFW…EVIF), 146 to 166 (LQVY…VLWF), 209 to 229 (FSNI…CIYI), 269 to 289 (VMPL…FEII), 309 to 329 (ISYW…IFFF), and 380 to 400 (IFLI…NLNI).

This sequence belongs to the SecY/SEC61-alpha family. In terms of assembly, component of the plastid Sec protein translocase complex, which is composed of at least SecY and SecE.

The protein localises to the plastid. The protein resides in the chloroplast thylakoid membrane. The central subunit of the protein translocation channel SecYE. Consists of two halves. These two domains form a lateral gate at the front which open onto the bilayer between TMs 2 and 7, and are clamped together by SecE at the back. The channel is closed by both a pore ring composed of hydrophobic SecY resides and a short helix (helix 2A) on the extracellular side of the membrane which forms a plug. The polypeptide is Protein translocase subunit SecY (Vaucheria litorea (Yellow-green alga)).